We begin with the raw amino-acid sequence, 491 residues long: Aspartyl/glutamyl-tRNA(Asn/Gln) amidotransferase subunit B (491 aa).

The protein belongs to the GatB/GatE family. GatB subfamily. In terms of assembly, heterotrimer of A, B and C subunits.

The enzyme catalyses L-glutamyl-tRNA(Gln) + L-glutamine + ATP + H2O = L-glutaminyl-tRNA(Gln) + L-glutamate + ADP + phosphate + H(+). The catalysed reaction is L-aspartyl-tRNA(Asn) + L-glutamine + ATP + H2O = L-asparaginyl-tRNA(Asn) + L-glutamate + ADP + phosphate + 2 H(+). Its function is as follows. Allows the formation of correctly charged Asn-tRNA(Asn) or Gln-tRNA(Gln) through the transamidation of misacylated Asp-tRNA(Asn) or Glu-tRNA(Gln) in organisms which lack either or both of asparaginyl-tRNA or glutaminyl-tRNA synthetases. The reaction takes place in the presence of glutamine and ATP through an activated phospho-Asp-tRNA(Asn) or phospho-Glu-tRNA(Gln). The sequence is that of Aspartyl/glutamyl-tRNA(Asn/Gln) amidotransferase subunit B from Burkholderia cenocepacia (strain ATCC BAA-245 / DSM 16553 / LMG 16656 / NCTC 13227 / J2315 / CF5610) (Burkholderia cepacia (strain J2315)).